The sequence spans 290 residues: Light-independent protochlorophyllide reductase iron-sulfur ATP-binding protein (290 aa).

Residues 10–15 (GIGKST) and Lys-39 each bind ATP. Residue Ser-14 participates in Mg(2+) binding. Cys-95 and Cys-129 together coordinate [4Fe-4S] cluster. 180–181 (NR) is a binding site for ATP.

Belongs to the NifH/BchL/ChlL family. As to quaternary structure, homodimer. Protochlorophyllide reductase is composed of three subunits; ChlL, ChlN and ChlB. [4Fe-4S] cluster is required as a cofactor.

It is found in the plastid. It localises to the chloroplast. The enzyme catalyses chlorophyllide a + oxidized 2[4Fe-4S]-[ferredoxin] + 2 ADP + 2 phosphate = protochlorophyllide a + reduced 2[4Fe-4S]-[ferredoxin] + 2 ATP + 2 H2O. It functions in the pathway porphyrin-containing compound metabolism; chlorophyll biosynthesis (light-independent). Functionally, component of the dark-operative protochlorophyllide reductase (DPOR) that uses Mg-ATP and reduced ferredoxin to reduce ring D of protochlorophyllide (Pchlide) to form chlorophyllide a (Chlide). This reaction is light-independent. The L component serves as a unique electron donor to the NB-component of the complex, and binds Mg-ATP. The polypeptide is Light-independent protochlorophyllide reductase iron-sulfur ATP-binding protein (Chaetosphaeridium globosum (Charophycean green alga)).